Reading from the N-terminus, the 194-residue chain is Large ribosomal subunit protein uL6z/uL6y (194 aa).

T75 is modified (phosphothreonine).

The protein belongs to the universal ribosomal protein uL6 family.

The protein is Large ribosomal subunit protein uL6z/uL6y (RPL9B) of Arabidopsis thaliana (Mouse-ear cress).